The primary structure comprises 160 residues: Transcription elongation factor GreA (160 aa).

Positions serine 49–isoleucine 77 form a coiled coil.

The protein belongs to the GreA/GreB family.

Functionally, necessary for efficient RNA polymerase transcription elongation past template-encoded arresting sites. The arresting sites in DNA have the property of trapping a certain fraction of elongating RNA polymerases that pass through, resulting in locked ternary complexes. Cleavage of the nascent transcript by cleavage factors such as GreA or GreB allows the resumption of elongation from the new 3'terminus. GreA releases sequences of 2 to 3 nucleotides. The sequence is that of Transcription elongation factor GreA from Leuconostoc mesenteroides subsp. mesenteroides (strain ATCC 8293 / DSM 20343 / BCRC 11652 / CCM 1803 / JCM 6124 / NCDO 523 / NBRC 100496 / NCIMB 8023 / NCTC 12954 / NRRL B-1118 / 37Y).